The chain runs to 370 residues: Type II restriction enzyme MjaII (370 aa).

This sequence belongs to the TdeIII type II restriction endonuclease family.

The catalysed reaction is Endonucleolytic cleavage of DNA to give specific double-stranded fragments with terminal 5'-phosphates.. Its function is as follows. A P subtype restriction enzyme that recognizes the double-stranded sequence 5'-GGNCC-3'; the cleavage site is unknown. This chain is Type II restriction enzyme MjaII (mjaIIR), found in Methanocaldococcus jannaschii (strain ATCC 43067 / DSM 2661 / JAL-1 / JCM 10045 / NBRC 100440) (Methanococcus jannaschii).